We begin with the raw amino-acid sequence, 290 residues long: Fat storage-inducing transmembrane protein 1 (290 aa).

At 1–18 the chain is on the lumenal side; the sequence is MERGPVVGAGLGARARIR. Residues 19-39 form a helical membrane-spanning segment; sequence TLLGCLVKVLLWVASALLYFG. The Cytoplasmic segment spans residues 40–54; it reads SEQAARLLGSPCLRR. A helical membrane pass occupies residues 55 to 75; sequence LYHAWLAAVVIFGPLLQFHVN. Residues 76-94 lie on the Lumenal side of the membrane; the sequence is PRTIFASHGNFFNIKFVNS. A helical membrane pass occupies residues 95-115; that stretch reads AWGWTCTFLGGFVLLVVFLAT. Residues 116–141 lie on the Cytoplasmic side of the membrane; it reads RRVAVTARHLSRLVVGAAVWRGAGRA. Residues 142–162 traverse the membrane as a helical segment; sequence FLLIEDLTGSCFEPLPQGLLL. Topologically, residues 163-187 are lumenal; it reads HELPDRRSRLAAGHQWRGYTVSSHT. The active site involves histidine 186. The helical transmembrane segment at 188–208 threads the bilayer; the sequence is FLLTFCCLLMAEEAAVFAKYL. The Cytoplasmic segment spans residues 209–220; that stretch reads AHGLPAGAPLRL. The helical transmembrane segment at 221–241 threads the bilayer; it reads VFLLNVLLLGLWNFLLLCTVI. The Lumenal portion of the chain corresponds to 242–249; it reads YFHQYTHK. The active site involves histidine 244. The helical transmembrane segment at 250 to 270 threads the bilayer; it reads VVGAAVGTFAWYLTYGSWYHQ. Over 271 to 290 the chain is Cytoplasmic; that stretch reads PWSPGSPGHGLFTHPSRKHN.

This sequence belongs to the FIT family. FIT1 subfamily.

Its subcellular location is the endoplasmic reticulum membrane. Its function is as follows. Plays an important role in the formation of lipid droplets (LDs) which are storage organelles at the center of lipid and energy homeostasis. Directly binds to diacylglycerol (DAGs) and triacylglycerol. The polypeptide is Fat storage-inducing transmembrane protein 1 (Sus scrofa (Pig)).